The chain runs to 1978 residues: MAARLLAPPGPDSFKPFTPESLANIERRIAESKLKKPPKADGSHREDDEDSKPKPNSDLEAGKSLPFIYGDIPQGLVAVPLEDFDPYYLTQKTFVVLNRGKTLFRFSATPALYILSPFNLIRRIAIKILIHSVFSMIIMCTILTNCVFMTFSNPPEWSKNVEYTFTGIYTFESLVKIIARGFCIDGFTFLRDPWNWLDFSVIMMAYVTEFVDLGNVSALRTFRVLRALKTISVIPGLKTIVGALIQSVKKLSDVMILTVFCLSVFALIGLQLFMGNLRNKCVVWPINFNESYLENGTRGFDWEEYINNKTNFYMVPGMLEPLLCGNSSDAGQCPEGFQCMKAGRNPNYGYTSFDTFSWAFLALFRLMTQDYWENLYQLTLRAAGKTYMIFFVLVIFVGSFYLVNLILAVVAMAYEEQNQATLEEAEQKEAEFKAMLEQLKKQQEEAQAAAMATSAGTVSEDAIEEEGEDGVGSPRSSSELSKLSSKSAKERRNRRKKRKQKELSEGEEKGDPEKVFKSESEDGMRRKAFRLPDNRIGRKFSIMNQSLLSIPGSPFLSRHNSKSSIFSFRGPGRFRDPGSENEFADDEHSTVEESEGRRDSLFIPIRARERRSSYSGYSGYSQCSRSSRIFPSLRRSVKRNSTVDCNGVVSLIGPGSHIGRLLPEATTEVEIKKKGPGSLLVSMDQLASYGRKDRINSIMSVVTNTLVEELEESQRKCPPCWYKFANTFLIWECHPYWIKLKEIVNLIVMDPFVDLAITICIVLNTLFMAMEHHPMTPQFEHVLAVGNLVFTGIFTAEMFLKLIAMDPYYYFQEGWNIFDGFIVSLSLMELSLADVEGLSVLRSFRLLRVFKLAKSWPTLNMLIKIIGNSVGALGNLTLVLAIIVFIFAVVGMQLFGKSYKECVCKINQECKLPRWHMNDFFHSFLIVFRVLCGEWIETMWDCMEVAGQAMCLIVFMMVMVIGNLVVLNLFLALLLSSFSADNLAATDDDGEMNNLQISVIRIKKGVAWTKVKVHAFMQAHFKQREADEVKPLDELYEKKANCIANHTGVDIHRNGDFQKNGNGTTSGIGSSVEKYIIDEDHMSFINNPNLTVRVPIAVGESDFENLNTEDVSSESDPEGSKDKLDDTSSSEGSTIDIKPEVEEVPVEQPEEYLDPDACFTEGCVQRFKCCQVNIEEGLGKSWWILRKTCFLIVEHNWFETFIIFMILLSSGALAFEDIYIEQRKTIRTILEYADKVFTYIFILEMLLKWTAYGFVKFFTNAWCWLDFLIVAVSLVSLIANALGYSELGAIKSLRTLRALRPLRALSRFEGMRVVVNALVGAIPSIMNVLLVCLIFWLIFSIMGVNLFAGKYHYCFNETSEIRFEIDIVNNKTDCEKLMEGNSTEIRWKNVKINFDNVGAGYLALLQVATFKGWMDIMYAAVDSRKPDEQPDYEGNIYMYIYFVIFIIFGSFFTLNLFIGVIIDNFNQQKKKFGGQDIFMTEEQKKYYNAMKKLGSKKPQKPIPRPLNKIQGIVFDFVTQQAFDIVIMMLICLNMVTMMVETDTQSKQMENILYWINLVFVIFFTCECVLKMFALRHYYFTIGWNIFDFVVVILSIVGMFLADIIEKYFVSPTLFRVIRLARIGRILRLIKGAKGIRTLLFALMMSLPALFNIGLLLFLVMFIFSIFGMSNFAYVKHEAGIDDMFNFETFGNSMICLFQITTSAGWDGLLLPILNRPPDCSLDKEHPGSGFKGDCGNPSVGIFFFVSYIIISFLIVVNMYIAIILENFSVATEESADPLSEDDFETFYEIWEKFDPDATQFIEYCKLADFADALEHPLRVPKPNTIELIAMDLPMVSGDRIHCLDILFAFTKRVLGDSGELDILRQQMEERFVASNPSKVSYEPITTTLRRKQEEVSAVVLQRAYRGHLARRGFICRKMASNKLENGGTHRDKKESTPSTASLPSYDSVTKPDKEKQQRAEEGRRERAKRQKEVRESKC.

Disordered regions lie at residues methionine 1–glutamate 20 and arginine 28–glycine 62. At methionine 1–serine 132 the chain is on the cytoplasmic side. A compositionally biased stretch (basic and acidic residues) spans arginine 28–alanine 61. An I repeat occupies isoleucine 114–glutamine 442. Residues valine 133–phenylalanine 151 form a helical membrane-spanning segment. The Extracellular segment spans residues serine 152–serine 158. Residues lysine 159 to alanine 179 form a helical membrane-spanning segment. The Cytoplasmic segment spans residues arginine 180 to proline 193. Residues tryptophan 194 to valine 211 traverse the membrane as a helical segment. The Extracellular portion of the chain corresponds to aspartate 212–serine 217. The N-linked (GlcNAc...) asparagine glycan is linked to asparagine 215. Residues alanine 218–isoleucine 234 form a helical membrane-spanning segment. Residues proline 235 to aspartate 253 lie on the Cytoplasmic side of the membrane. Residues valine 254–phenylalanine 273 traverse the membrane as a helical segment. The Extracellular portion of the chain corresponds to methionine 274–threonine 355. Cysteines 281 and 333 form a disulfide. N-linked (GlcNAc...) asparagine glycosylation is found at asparagine 289, asparagine 295, asparagine 308, and asparagine 326. Positions phenylalanine 356–leucine 380 form an intramembrane region, pore-forming. Glutamate 373 serves as a coordination point for Na(+). The Extracellular portion of the chain corresponds to arginine 381–tyrosine 387. The chain crosses the membrane as a helical span at residues methionine 388–alanine 408. Residues valine 409–proline 751 are Cytoplasmic-facing. Disordered stretches follow at residues alanine 446–arginine 530 and aspartate 576–arginine 597. Residues serine 473–lysine 486 are compositionally biased toward low complexity. The span at lysine 489 to glutamine 500 shows a compositional bias: basic residues. Basic and acidic residues-rich tracts occupy residues lysine 501–arginine 530 and aspartate 586–arginine 597. Serine 518 and serine 520 each carry phosphoserine. The stretch at cysteine 733 to glycine 1005 is one II repeat. The helical transmembrane segment at phenylalanine 752–methionine 770 threads the bilayer. Residues glutamate 771–histidine 781 lie on the Extracellular side of the membrane. Residues valine 782–lysine 801 form a helical membrane-spanning segment. At leucine 802 to tryptophan 815 the chain is on the cytoplasmic side. The helical transmembrane segment at asparagine 816–valine 835 threads the bilayer. Residues glutamate 836–glycine 837 lie on the Extracellular side of the membrane. Residues leucine 838–serine 855 form a helical membrane-spanning segment. The Cytoplasmic portion of the chain corresponds to tryptophan 856–glycine 871. A helical membrane pass occupies residues alanine 872–valine 890. Topologically, residues glycine 891–aspartate 919 are extracellular. A disulfide bond links cysteine 904 and cysteine 910. The pore-forming intramembrane region spans phenylalanine 920–tryptophan 940. Na(+)-binding residues include glutamate 934 and glutamate 937. Topologically, residues aspartate 941–isoleucine 953 are extracellular. Cysteine 942 and cysteine 951 are disulfide-bonded. A helical membrane pass occupies residues valine 954 to leucine 974. At leucine 975 to tryptophan 1197 the chain is on the cytoplasmic side. Positions asparagine 1105–valine 1146 are disordered. One copy of the III repeat lies at leucine 1178 to leucine 1493. The helical transmembrane segment at phenylalanine 1198–phenylalanine 1215 threads the bilayer. Residues glutamate 1216–threonine 1228 are Extracellular-facing. A helical membrane pass occupies residues isoleucine 1229 to leucine 1247. Topologically, residues lysine 1248–alanine 1261 are cytoplasmic. A helical transmembrane segment spans residues tryptophan 1262 to asparagine 1280. Topologically, residues alanine 1281–glycine 1288 are extracellular. Residues alanine 1289–arginine 1307 traverse the membrane as a helical segment. Residues phenylalanine 1308–serine 1324 are Cytoplasmic-facing. A helical transmembrane segment spans residues isoleucine 1325–valine 1344. The Extracellular segment spans residues asparagine 1345–valine 1397. The cysteines at positions 1354 and 1374 are disulfide-linked. N-linked (GlcNAc...) asparagine glycosylation is found at asparagine 1356, asparagine 1370, and asparagine 1381. Positions glycine 1398–alanine 1419 form an intramembrane region, pore-forming. Over alanine 1420–isoleucine 1436 the chain is Extracellular. A helical membrane pass occupies residues tyrosine 1437–isoleucine 1458. The Cytoplasmic portion of the chain corresponds to glycine 1459–alanine 1521. Serine 1495 is modified (phosphoserine; by PKC). An IV repeat occupies isoleucine 1502–glutamine 1799. The chain crosses the membrane as a helical span at residues phenylalanine 1522–valine 1539. Topologically, residues glutamate 1540–asparagine 1550 are extracellular. Residues isoleucine 1551–leucine 1569 traverse the membrane as a helical segment. Residues lysine 1570 to isoleucine 1581 are Cytoplasmic-facing. A helical transmembrane segment spans residues glycine 1582–phenylalanine 1599. The Extracellular segment spans residues leucine 1600–threonine 1612. The chain crosses the membrane as a helical span at residues leucine 1613–isoleucine 1629. Residues lysine 1630–alanine 1648 lie on the Cytoplasmic side of the membrane. A helical transmembrane segment spans residues leucine 1649 to phenylalanine 1666. At glycine 1667–threonine 1688 the chain is on the extracellular side. The pore-forming intramembrane region spans phenylalanine 1689–proline 1711. Over isoleucine 1712 to glycine 1740 the chain is Extracellular. Residues cysteine 1719 and cysteine 1734 are joined by a disulfide bond. Residues isoleucine 1741–isoleucine 1763 form a helical membrane-spanning segment. Over leucine 1764–cysteine 1978 the chain is Cytoplasmic. Residues glutamate 1893–lysine 1922 form the IQ domain. The disordered stretch occupies residues leucine 1923–cysteine 1978. Residues threonine 1936–serine 1947 are compositionally biased toward polar residues. A compositionally biased stretch (basic and acidic residues) spans threonine 1949–cysteine 1978.

It belongs to the sodium channel (TC 1.A.1.10) family. Nav1.6/SCN8A subfamily. As to quaternary structure, the voltage-sensitive sodium channel consists of an ion-conducting pore-forming alpha subunit regulated by one or more beta-1 (SCN1B), beta-2 (SCN2B), beta-3 (SCN3B) and/or beta-4 (SCN4B) subunits. Beta-1 (SCN1B) and beta-3 (SCN3B) are non-covalently associated with alpha, while beta-2 (SCN2B) and beta-4 (SCN4B) are covalently linked by disulfide bonds. Interacts with NEDD4 and NEDD4L. Interacts with FGF13. Interacts with FGF14, GBG3, GBB2 and SCN1B. Interacts with TMEM233. Interacts with the conotoxin GVIIJ. Interacts with CALM1; the interaction modulates the inactivation rate of SCN8A. In terms of processing, may be ubiquitinated by NEDD4L; which would promote its endocytosis. Post-translationally, phosphorylation at Ser-1495 by PKC in a highly conserved cytoplasmic loop slows inactivation of the sodium channel and reduces peak sodium currents. As to expression, isoform 1 is highly expressed in brain, moderately in spinal cord, and at low levels in dorsal root ganglia, nodose ganglia and superior cervical ganglia. Not detected in sciatic nerve and non-neuronal tissues. Isoform 2 is hardly detectable, if at all, in brain, expressed at low levels in spinal cord and at highest levels in dorsal root ganglia.

Its subcellular location is the cell membrane. The protein localises to the cell projection. The protein resides in the axon. The catalysed reaction is Na(+)(in) = Na(+)(out). Functionally, pore-forming subunit of a voltage-gated sodium channel complex assuming opened or closed conformations in response to the voltage difference across membranes and through which sodium ions selectively pass along their electrochemical gradient. Contributes to neuronal excitability by regulating action potential threshold and propagation. In Rattus norvegicus (Rat), this protein is Sodium channel protein type 8 subunit alpha.